Consider the following 61-residue polypeptide: MRFTGIILILISMTLIDSFFEMKVEATGPQTTCQAAMCEAGCKGLGKSMESCQGDTCKCKA.

A signal peptide spans 1–24 (MRFTGIILILISMTLIDSFFEMKV). 3 cysteine pairs are disulfide-bonded: cysteine 33–cysteine 52, cysteine 38–cysteine 57, and cysteine 42–cysteine 59.

Expressed by the venom gland.

Its subcellular location is the secreted. Reversible blocker of both Kv1.3/KCNA3 potassium channels (high affinity) and Shaker B (mammalian Kv1.1 analog) potassium channels (very low affinity). The chain is Potassium channel toxin alpha-KTx 18.1 from Tityus obscurus (Amazonian scorpion).